A 276-amino-acid polypeptide reads, in one-letter code: Pantothenate synthetase (276 aa).

An ATP-binding site is contributed by 25–32; it reads MGYLHRGH. His32 functions as the Proton donor in the catalytic mechanism. Residue Gln56 coordinates (R)-pantoate. Gln56 is a beta-alanine binding site. 143–146 provides a ligand contact to ATP; the sequence is GEKD. Residue Gln149 participates in (R)-pantoate binding. ATP contacts are provided by residues Val172 and 180-183; that span reads LSSR.

Belongs to the pantothenate synthetase family. In terms of assembly, homodimer.

Its subcellular location is the cytoplasm. The enzyme catalyses (R)-pantoate + beta-alanine + ATP = (R)-pantothenate + AMP + diphosphate + H(+). Its pathway is cofactor biosynthesis; (R)-pantothenate biosynthesis; (R)-pantothenate from (R)-pantoate and beta-alanine: step 1/1. In terms of biological role, catalyzes the condensation of pantoate with beta-alanine in an ATP-dependent reaction via a pantoyl-adenylate intermediate. The protein is Pantothenate synthetase of Thermus thermophilus (strain ATCC BAA-163 / DSM 7039 / HB27).